The primary structure comprises 142 residues: ATP synthase epsilon chain (142 aa).

The protein belongs to the ATPase epsilon chain family. F-type ATPases have 2 components, CF(1) - the catalytic core - and CF(0) - the membrane proton channel. CF(1) has five subunits: alpha(3), beta(3), gamma(1), delta(1), epsilon(1). CF(0) has three main subunits: a, b and c.

The protein resides in the cell inner membrane. In terms of biological role, produces ATP from ADP in the presence of a proton gradient across the membrane. This Shewanella oneidensis (strain ATCC 700550 / JCM 31522 / CIP 106686 / LMG 19005 / NCIMB 14063 / MR-1) protein is ATP synthase epsilon chain.